Here is a 116-residue protein sequence, read N- to C-terminus: Large ribosomal subunit protein bL20 (116 aa).

This sequence belongs to the bacterial ribosomal protein bL20 family.

Its function is as follows. Binds directly to 23S ribosomal RNA and is necessary for the in vitro assembly process of the 50S ribosomal subunit. It is not involved in the protein synthesizing functions of that subunit. In Helicobacter pylori (strain Shi470), this protein is Large ribosomal subunit protein bL20.